The chain runs to 694 residues: Transcriptional activator HAA1 (694 aa).

Residues 1-40 (MVLINGIKYACERCIRGHRVTTCNHTDQPLMMIKPKGRPS) constitute a DNA-binding region (copper-fist). Zn(2+) is bound by residues Cys11, Cys14, Cys23, and His25. 2 disordered regions span residues 104 to 128 (QKRH…SQPM) and 209 to 240 (FNFL…DSSV). Residues 111–126 (SPSSSQKKGRSISRSQ) are compositionally biased toward polar residues. 4 positions are modified to phosphoserine: Ser125, Ser231, Ser241, and Ser291. Disordered stretches follow at residues 332–388 (FDIN…NGLF), 479–514 (EKER…HRYP), 566–588 (SSIH…SRQD), and 650–677 (MIST…PPSQ). Residues 336–349 (DNCNRINSKSYSKT) show a composition bias toward polar residues. The span at 350-378 (NSMNGNGMNNSNNNNINSNGNDKNNNNSS) shows a compositional bias: low complexity. Composition is skewed to polar residues over residues 566-577 (SSIHSVPQSINS) and 664-677 (SPMS…PPSQ).

Its subcellular location is the nucleus. Functionally, regulates the transcription of a set of genes, many of which encode membrane proteins. Among the genes regulated are YGR138C and YRO2. Does not seem to be dependent on copper. The sequence is that of Transcriptional activator HAA1 (HAA1) from Saccharomyces cerevisiae (strain ATCC 204508 / S288c) (Baker's yeast).